The following is a 212-amino-acid chain: Leucyl/phenylalanyl-tRNA--protein transferase (212 aa).

Belongs to the L/F-transferase family.

The protein resides in the cytoplasm. It catalyses the reaction N-terminal L-lysyl-[protein] + L-leucyl-tRNA(Leu) = N-terminal L-leucyl-L-lysyl-[protein] + tRNA(Leu) + H(+). The enzyme catalyses N-terminal L-arginyl-[protein] + L-leucyl-tRNA(Leu) = N-terminal L-leucyl-L-arginyl-[protein] + tRNA(Leu) + H(+). It carries out the reaction L-phenylalanyl-tRNA(Phe) + an N-terminal L-alpha-aminoacyl-[protein] = an N-terminal L-phenylalanyl-L-alpha-aminoacyl-[protein] + tRNA(Phe). Its function is as follows. Functions in the N-end rule pathway of protein degradation where it conjugates Leu, Phe and, less efficiently, Met from aminoacyl-tRNAs to the N-termini of proteins containing an N-terminal arginine or lysine. In Allorhizobium ampelinum (strain ATCC BAA-846 / DSM 112012 / S4) (Agrobacterium vitis (strain S4)), this protein is Leucyl/phenylalanyl-tRNA--protein transferase.